Reading from the N-terminus, the 253-residue chain is Small ribosomal subunit protein eS6 (253 aa).

The interval 200 to 253 is disordered; sequence KKRLAKRKQSENDYAKLLAQRKKESKVRRQEELKRRRSASMRDSKSSDKSAPQK. The span at 226-247 shows a compositional bias: basic and acidic residues; the sequence is VRRQEELKRRRSASMRDSKSSD.

Belongs to the eukaryotic ribosomal protein eS6 family. Component of the small ribosomal subunit. Part of the small subunit (SSU) processome, composed of more than 70 proteins and the RNA chaperone small nucleolar RNA (snoRNA) U3. In terms of processing, ribosomal protein S6 is the major substrate of protein kinases in eukaryote ribosomes.

The protein localises to the cytoplasm. The protein resides in the nucleus. Its subcellular location is the nucleolus. Its function is as follows. Component of the 40S small ribosomal subunit. Plays an important role in controlling cell growth and proliferation through the selective translation of particular classes of mRNA. Part of the small subunit (SSU) processome, first precursor of the small eukaryotic ribosomal subunit. During the assembly of the SSU processome in the nucleolus, many ribosome biogenesis factors, an RNA chaperone and ribosomal proteins associate with the nascent pre-rRNA and work in concert to generate RNA folding, modifications, rearrangements and cleavage as well as targeted degradation of pre-ribosomal RNA by the RNA exosome. This Spodoptera frugiperda (Fall armyworm) protein is Small ribosomal subunit protein eS6 (RpS6).